Consider the following 605-residue polypeptide: Alpha-1,3-galactosidase A (605 aa).

The signal sequence occupies residues 1–20 (MKKYLHILPACFLFYAAAHA). PbH1 repeat units lie at residues 256-278 (SKNI…VSQY), 312-334 (KGKV…NVHG), 421-443 (TPEV…LVTT), 444-466 (PRKV…LIEA), 477-507 (VKDV…HPSN), and 517-547 (HQNI…LFRN).

This sequence belongs to the glycosyl hydrolase 110 family. A subfamily.

It catalyses the reaction Hydrolysis of terminal, non-reducing branched (1-&gt;3)-alpha-D-galactosidic residues, producing free D-galactose.. The enzyme catalyses Hydrolysis of terminal, non-reducing alpha-D-galactose residues in alpha-D-galactosides, including galactose oligosaccharides, galactomannans and galactolipids.. Alpha-galactosidase that specifically removes branched alpha-1,3-linked galactose residues present in blood group B antigens. Has no activity toward linear alpha-1,3-linked galactose residues. The polypeptide is Alpha-1,3-galactosidase A (glaA) (Bacteroides fragilis (strain YCH46)).